A 237-amino-acid chain; its full sequence is Protein GrpE (237 aa).

Positions 1–65 (MTDSYKLPDN…DAREDDRDPT (65 aa)) are disordered. The segment covering 55 to 65 (VDAREDDRDPT) has biased composition (basic and acidic residues).

Belongs to the GrpE family. As to quaternary structure, homodimer.

It localises to the cytoplasm. Functionally, participates actively in the response to hyperosmotic and heat shock by preventing the aggregation of stress-denatured proteins, in association with DnaK and GrpE. It is the nucleotide exchange factor for DnaK and may function as a thermosensor. Unfolded proteins bind initially to DnaJ; upon interaction with the DnaJ-bound protein, DnaK hydrolyzes its bound ATP, resulting in the formation of a stable complex. GrpE releases ADP from DnaK; ATP binding to DnaK triggers the release of the substrate protein, thus completing the reaction cycle. Several rounds of ATP-dependent interactions between DnaJ, DnaK and GrpE are required for fully efficient folding. This chain is Protein GrpE, found in Corynebacterium efficiens (strain DSM 44549 / YS-314 / AJ 12310 / JCM 11189 / NBRC 100395).